The primary structure comprises 293 residues: Formamidopyrimidine-DNA glycosylase (293 aa).

P2 serves as the catalytic Schiff-base intermediate with DNA. E3 (proton donor) is an active-site residue. K58 (proton donor; for beta-elimination activity) is an active-site residue. Residues H104, R123, and R166 each contribute to the DNA site. The FPG-type zinc finger occupies 257–293; it reads QVYDREGDKCRTPACKGAVKRFTQNGRSTFWCPVCQT. R283 serves as the catalytic Proton donor; for delta-elimination activity.

This sequence belongs to the FPG family. Monomer. Zn(2+) is required as a cofactor.

It carries out the reaction Hydrolysis of DNA containing ring-opened 7-methylguanine residues, releasing 2,6-diamino-4-hydroxy-5-(N-methyl)formamidopyrimidine.. It catalyses the reaction 2'-deoxyribonucleotide-(2'-deoxyribose 5'-phosphate)-2'-deoxyribonucleotide-DNA = a 3'-end 2'-deoxyribonucleotide-(2,3-dehydro-2,3-deoxyribose 5'-phosphate)-DNA + a 5'-end 5'-phospho-2'-deoxyribonucleoside-DNA + H(+). In terms of biological role, involved in base excision repair of DNA damaged by oxidation or by mutagenic agents. Acts as a DNA glycosylase that recognizes and removes damaged bases. Has a preference for oxidized purines, such as 7,8-dihydro-8-oxoguanine (8-oxoG). Has AP (apurinic/apyrimidinic) lyase activity and introduces nicks in the DNA strand. Cleaves the DNA backbone by beta-delta elimination to generate a single-strand break at the site of the removed base with both 3'- and 5'-phosphates. This chain is Formamidopyrimidine-DNA glycosylase, found in Nitrobacter winogradskyi (strain ATCC 25391 / DSM 10237 / CIP 104748 / NCIMB 11846 / Nb-255).